A 380-amino-acid polypeptide reads, in one-letter code: Cytochrome b (380 aa).

4 helical membrane-spanning segments follow: residues 28-48, 72-93, 109-129, and 174-194; these read IGSL…FLSL, WLVR…YAHI, WLVG…GYVL, and FYSF…VHLL. Positions 78 and 92 each coordinate heme b. H178 and H192 together coordinate heme b. Residue H197 coordinates a ubiquinone. 4 helical membrane passes run 222–243, 285–305, 317–337, and 344–364; these read WKIL…CYIT, IGGV…PLAL, IGQL…WLGA, and YISL…LYMI.

Belongs to the cytochrome b family. The main subunits of complex b-c1 are: cytochrome b, cytochrome c1 and the Rieske protein. Heme b serves as cofactor.

The protein resides in the mitochondrion inner membrane. Functionally, component of the ubiquinol-cytochrome c reductase complex (complex III or cytochrome b-c1 complex) that is part of the mitochondrial respiratory chain. The b-c1 complex mediates electron transfer from ubiquinol to cytochrome c. Contributes to the generation of a proton gradient across the mitochondrial membrane that is then used for ATP synthesis. This chain is Cytochrome b (MT-CYB), found in Cepaea nemoralis (Banded wood snail).